The sequence spans 307 residues: ADP,ATP carrier protein 3 (307 aa).

Solcar repeat units follow at residues 10–103 (TNFA…IKLM), 114–206 (KWFA…LKPL), and 214–300 (GSFL…LQMI). The next 5 helical transmembrane spans lie at 12 to 39 (FAINFLMGGVSAAIAKTAASPIERVKIL), 80 to 104 (TANVIRYFPTQALNFAFKDKIKLMF), 112 to 132 (YGKWFAGNLASGGAAGALSLL), 182 to 203 (FMPSVVGIVVYRGLYFGMFDSL), and 217 to 237 (LASFLLGWVVTTGASTCSYPL). Residues R85 and K97 each coordinate ADP. Residue R241 coordinates ADP. Residues 241–246 (RRRMMM) are important for transport activity. The short motif at 241-246 (RRRMMM) is the Nucleotide carrier signature motif element. Residues 277–297 (CGANILRSVAGAGVISMYDQL) traverse the membrane as a helical segment.

The protein belongs to the mitochondrial carrier (TC 2.A.29) family. As to quaternary structure, monomer.

It localises to the mitochondrion inner membrane. It carries out the reaction ADP(in) + ATP(out) = ADP(out) + ATP(in). Its activity is regulated as follows. The matrix-open state (m-state) is inhibited by the membrane-permeable bongkrekic acid (BKA). The cytoplasmic-open state (c-state) is inhibited by the membrane-impermeable toxic inhibitor carboxyatractyloside (CATR). Functionally, ADP:ATP antiporter that mediates import of ADP into the mitochondrial matrix for ATP synthesis, and export of ATP out to fuel the cell. Cycles between the cytoplasmic-open state (c-state) and the matrix-open state (m-state): operates by the alternating access mechanism with a single substrate-binding site intermittently exposed to either the cytosolic (c-state) or matrix (m-state) side of the inner mitochondrial membrane. The chain is ADP,ATP carrier protein 3 (AAC3) from Saccharomyces cerevisiae (strain ATCC 204508 / S288c) (Baker's yeast).